The chain runs to 120 residues: Large ribosomal subunit protein bL20 (120 aa).

Belongs to the bacterial ribosomal protein bL20 family.

Functionally, binds directly to 23S ribosomal RNA and is necessary for the in vitro assembly process of the 50S ribosomal subunit. It is not involved in the protein synthesizing functions of that subunit. The sequence is that of Large ribosomal subunit protein bL20 from Desulforudis audaxviator (strain MP104C).